Reading from the N-terminus, the 361-residue chain is Adenosine kinase (361 aa).

Residues 7–15 (PKPKKLKVE) carry the Nuclear localization signal motif. Adenosine is bound at residue Asp34. Ser48 is a binding site for Mg(2+). Tyr76 carries the post-translational modification Phosphotyrosine. Residues Asp146 and Asn147 each contribute to the Mg(2+) site. Gln305 is an adenosine binding site. Residue Asp316 is part of the active site. Asp316 acts as the Proton acceptor in catalysis.

Belongs to the carbohydrate kinase PfkB family. As to quaternary structure, monomer. The cofactor is Mg(2+). Post-translationally, the N-terminus is blocked.

It localises to the nucleus. It carries out the reaction adenosine + ATP = AMP + ADP + H(+). It functions in the pathway purine metabolism; AMP biosynthesis via salvage pathway; AMP from adenosine: step 1/1. Activity is inhibited by 5-iodotubercidin and 5'-amino-5'-deoxyadenosine. Functionally, catalyzes the phosphorylation of the purine nucleoside adenosine at the 5' position in an ATP-dependent manner. Serves as a potential regulator of concentrations of extracellular adenosine and intracellular adenine nucleotides. This chain is Adenosine kinase (ADK), found in Cricetulus griseus (Chinese hamster).